Here is a 73-residue protein sequence, read N- to C-terminus: Antimicrobial peptide TsAP-2 (73 aa).

The N-terminal stretch at 1–22 (MQIKHLITIFFLVLIVADHCHA) is a signal peptide. Residue Lys39 is modified to Lysine amide. A propeptide spanning residues 45 to 73 (EITSQIEQYRNLQKREAELENLLANLPVY) is cleaved from the precursor.

The protein belongs to the non-disulfide-bridged peptide (NDBP) superfamily. Short antimicrobial peptide (group 4) family. As to expression, expressed by the venom gland.

Its subcellular location is the secreted. In terms of biological role, antimicrobial peptide. Has a high antibacterial activity against the Gram-positive bacterium S.aureus (MIC=5-17.30 uM), the methicillin-resistant S.aureus (MRSA) (MIC=17.30 uM), and E.faecalis (MIC=69.23 uM). Has antifungal activity against Candida spp. and one Cryptococcus neoformans strains with MICs values ranging from 6.25 to 100 uM. Also shows an inhibitory activity on C.albicans biofilms at high concentrations. Has a moderate hemolytic potency (18% at 20 uM). Also inhibits the growth of the five human cancer cell lines tested (the squamous carcinoma cell line H157 (IC(50)=4.1 uM), the lung adenocarcinoma cell line H838 (11.0 uM), the breast carcinoma cell line MCF-7 (6.4 uM), the androgen-independent prostate adenocarcinoma cell line PC3 (13.3 uM) and the glioblastoma cell line U251-MG (15.4 uM)). In the model of polymicrobial sepsis, it exhibits an antibiotic effect, reducing the levels of microorganisms in the infectious focus and the inflammatory responses in the lung and cecum of septic animals. This is Antimicrobial peptide TsAP-2 from Tityus serrulatus (Brazilian scorpion).